A 305-amino-acid chain; its full sequence is Aspartate carbamoyltransferase catalytic subunit (305 aa).

2 residues coordinate carbamoyl phosphate: Arg54 and Thr55. Lys83 contacts L-aspartate. Carbamoyl phosphate is bound by residues Arg104, His132, and Gln135. Positions 165 and 226 each coordinate L-aspartate. Residues Leu265 and Pro266 each contribute to the carbamoyl phosphate site.

The protein belongs to the aspartate/ornithine carbamoyltransferase superfamily. ATCase family. Heterooligomer of catalytic and regulatory chains.

It catalyses the reaction carbamoyl phosphate + L-aspartate = N-carbamoyl-L-aspartate + phosphate + H(+). Its pathway is pyrimidine metabolism; UMP biosynthesis via de novo pathway; (S)-dihydroorotate from bicarbonate: step 2/3. Functionally, catalyzes the condensation of carbamoyl phosphate and aspartate to form carbamoyl aspartate and inorganic phosphate, the committed step in the de novo pyrimidine nucleotide biosynthesis pathway. The sequence is that of Aspartate carbamoyltransferase catalytic subunit from Pyrobaculum calidifontis (strain DSM 21063 / JCM 11548 / VA1).